The following is a 345-amino-acid chain: Phosphate acyltransferase (345 aa).

It belongs to the PlsX family. In terms of assembly, homodimer. Probably interacts with PlsY.

Its subcellular location is the cytoplasm. The catalysed reaction is a fatty acyl-[ACP] + phosphate = an acyl phosphate + holo-[ACP]. It functions in the pathway lipid metabolism; phospholipid metabolism. Functionally, catalyzes the reversible formation of acyl-phosphate (acyl-PO(4)) from acyl-[acyl-carrier-protein] (acyl-ACP). This enzyme utilizes acyl-ACP as fatty acyl donor, but not acyl-CoA. The polypeptide is Phosphate acyltransferase (Wolbachia pipientis wMel).